The chain runs to 160 residues: S-ribosylhomocysteine lyase (160 aa).

Residues His-57, His-61, and Cys-127 each contribute to the Fe cation site.

Belongs to the LuxS family. As to quaternary structure, homodimer. Requires Fe cation as cofactor.

The enzyme catalyses S-(5-deoxy-D-ribos-5-yl)-L-homocysteine = (S)-4,5-dihydroxypentane-2,3-dione + L-homocysteine. In terms of biological role, involved in the synthesis of autoinducer 2 (AI-2) which is secreted by bacteria and is used to communicate both the cell density and the metabolic potential of the environment. The regulation of gene expression in response to changes in cell density is called quorum sensing. Catalyzes the transformation of S-ribosylhomocysteine (RHC) to homocysteine (HC) and 4,5-dihydroxy-2,3-pentadione (DPD). This chain is S-ribosylhomocysteine lyase, found in Streptococcus agalactiae serotype V (strain ATCC BAA-611 / 2603 V/R).